The following is a 159-amino-acid chain: Transcription antitermination protein NusB (159 aa).

It belongs to the NusB family.

Functionally, involved in transcription antitermination. Required for transcription of ribosomal RNA (rRNA) genes. Binds specifically to the boxA antiterminator sequence of the ribosomal RNA (rrn) operons. The protein is Transcription antitermination protein NusB of Stenotrophomonas maltophilia (strain K279a).